Consider the following 486-residue polypeptide: MTHYIQGQWHTGNGHDVTSINPANGETIWCGKTATAEQVNAAVEAARAAQFDWFMLGFDARLAIVEAYRSQLEANKAELAETIAQETGKPQWETATEVGAMIGKIALSAAAYHKRTGTEANDTPAGRAVIRHKPHGVVAVFGPYNFPGHLPNGHIVPALLAGNTVIFKPSELTPKVAELMVTLWDKAGLPAGVINLVQGEVDTGKALASHPQIDGLFFTGSSRTGHLLHQQYAGHPGKILALEMGGNNPLIIKGVQDIKAAVHDILQSAYISSGQRCTCARRLYVEQGEQGDALIALLVDAVKQIKVGPWNAQPQPFMGSMISETAAKGMVAAQANLLDLGGKVLVELTHLQAGTGLVSPGLIDVTAIDVLPDEEYFGPLLQLVRYGDFDQAIKLANQTRYGLSAGLLADSREDYDYFLARIRAGIVNWNKQITGASGAAPFGGVGASGNHRASAFYAADYCAYPVASVEADAVSLPATLSPGLSL.

220–225 (GSSRTG) is a binding site for NAD(+). Residues E243 and C277 contribute to the active site.

It belongs to the aldehyde dehydrogenase family. AstD subfamily.

It carries out the reaction N-succinyl-L-glutamate 5-semialdehyde + NAD(+) + H2O = N-succinyl-L-glutamate + NADH + 2 H(+). Its pathway is amino-acid degradation; L-arginine degradation via AST pathway; L-glutamate and succinate from L-arginine: step 4/5. Catalyzes the NAD-dependent reduction of succinylglutamate semialdehyde into succinylglutamate. The protein is N-succinylglutamate 5-semialdehyde dehydrogenase of Shewanella sp. (strain W3-18-1).